Reading from the N-terminus, the 740-residue chain is Catalase-peroxidase 2 (740 aa).

An N-terminal signal peptide occupies residues 1-27 (MFKKTKPRISILALTISCAIYSGAALA). The segment at residues 106 to 228 (WHSAGTYRIY…LAAVQMGLIY (123 aa)) is a cross-link (tryptophyl-tyrosyl-methioninium (Trp-Tyr) (with M-254)). Residue His107 is the Proton acceptor of the active site. Residues 228-254 (YVNPEGPNGVPDPLLAAKDIRDTFGRM) constitute a cross-link (tryptophyl-tyrosyl-methioninium (Tyr-Met) (with W-106)). His269 contacts heme b.

It belongs to the peroxidase family. Peroxidase/catalase subfamily. Homodimer or homotetramer. Requires heme b as cofactor. Formation of the three residue Trp-Tyr-Met cross-link is important for the catalase, but not the peroxidase activity of the enzyme.

The catalysed reaction is H2O2 + AH2 = A + 2 H2O. It catalyses the reaction 2 H2O2 = O2 + 2 H2O. Bifunctional enzyme with both catalase and broad-spectrum peroxidase activity. In Cellvibrio japonicus (strain Ueda107) (Pseudomonas fluorescens subsp. cellulosa), this protein is Catalase-peroxidase 2.